The following is a 497-amino-acid chain: tRNA-2-methylthio-N(6)-dimethylallyladenosine synthase (497 aa).

Residues 1–50 (MTGTSNIPTHGKEHKDAPALLPLPAPNPHHTHAAHPGDPSHDRPPSRGKL) form a disordered region. An MTTase N-terminal domain is found at 48 to 165 (GKLFIKTHGC…LPDMIRARRE (118 aa)). Residues C57, C94, C128, C202, C206, and C209 each coordinate [4Fe-4S] cluster. In terms of domain architecture, Radical SAM core spans 188 to 430 (RAEGPSAFVS…QKHINAYAAD (243 aa)). Residues 433–496 (KRMIGTVQTV…TNSLRGRVHT (64 aa)) form the TRAM domain.

It belongs to the methylthiotransferase family. MiaB subfamily. As to quaternary structure, monomer. [4Fe-4S] cluster is required as a cofactor.

It localises to the cytoplasm. It catalyses the reaction N(6)-dimethylallyladenosine(37) in tRNA + (sulfur carrier)-SH + AH2 + 2 S-adenosyl-L-methionine = 2-methylsulfanyl-N(6)-dimethylallyladenosine(37) in tRNA + (sulfur carrier)-H + 5'-deoxyadenosine + L-methionine + A + S-adenosyl-L-homocysteine + 2 H(+). Its function is as follows. Catalyzes the methylthiolation of N6-(dimethylallyl)adenosine (i(6)A), leading to the formation of 2-methylthio-N6-(dimethylallyl)adenosine (ms(2)i(6)A) at position 37 in tRNAs that read codons beginning with uridine. This Xylella fastidiosa (strain M12) protein is tRNA-2-methylthio-N(6)-dimethylallyladenosine synthase.